A 291-amino-acid chain; its full sequence is 33 kDa chaperonin (291 aa).

2 disulfide bridges follow: Cys-237/Cys-239 and Cys-270/Cys-273.

Belongs to the HSP33 family. In terms of processing, under oxidizing conditions two disulfide bonds are formed involving the reactive cysteines. Under reducing conditions zinc is bound to the reactive cysteines and the protein is inactive.

It is found in the cytoplasm. Redox regulated molecular chaperone. Protects both thermally unfolding and oxidatively damaged proteins from irreversible aggregation. Plays an important role in the bacterial defense system toward oxidative stress. In Clostridioides difficile (strain 630) (Peptoclostridium difficile), this protein is 33 kDa chaperonin.